The primary structure comprises 438 residues: Glutamyl-tRNA reductase (438 aa).

Substrate-binding positions include 55–58 (TCNR), Ser-118, 123–125 (ETQ), and Gln-129. The active-site Nucleophile is Cys-56. NADP(+) is bound at residue 198–203 (GAGDMI).

It belongs to the glutamyl-tRNA reductase family. In terms of assembly, homodimer.

It catalyses the reaction (S)-4-amino-5-oxopentanoate + tRNA(Glu) + NADP(+) = L-glutamyl-tRNA(Glu) + NADPH + H(+). The protein operates within porphyrin-containing compound metabolism; protoporphyrin-IX biosynthesis; 5-aminolevulinate from L-glutamyl-tRNA(Glu): step 1/2. Its function is as follows. Catalyzes the NADPH-dependent reduction of glutamyl-tRNA(Glu) to glutamate 1-semialdehyde (GSA). The polypeptide is Glutamyl-tRNA reductase (Polynucleobacter asymbioticus (strain DSM 18221 / CIP 109841 / QLW-P1DMWA-1) (Polynucleobacter necessarius subsp. asymbioticus)).